Consider the following 386-residue polypeptide: GTPase Obg (386 aa).

The 159-residue stretch at 1 to 159 (MKFIDEARIE…RTLKLELKVL (159 aa)) folds into the Obg domain. Residues 160 to 348 (ADVGLLGMPN…LTFAIMSYLD (189 aa)) form the OBG-type G domain. GTP-binding positions include 166–173 (GMPNAGKS), 191–195 (FTTLH), 213–216 (DIPG), 284–287 (NKVD), and 329–331 (SAL). Mg(2+)-binding residues include Ser173 and Thr193.

The protein belongs to the TRAFAC class OBG-HflX-like GTPase superfamily. OBG GTPase family. As to quaternary structure, monomer. Mg(2+) serves as cofactor.

The protein resides in the cytoplasm. Its function is as follows. An essential GTPase which binds GTP, GDP and possibly (p)ppGpp with moderate affinity, with high nucleotide exchange rates and a fairly low GTP hydrolysis rate. Plays a role in control of the cell cycle, stress response, ribosome biogenesis and in those bacteria that undergo differentiation, in morphogenesis control. The polypeptide is GTPase Obg (Chromobacterium violaceum (strain ATCC 12472 / DSM 30191 / JCM 1249 / CCUG 213 / NBRC 12614 / NCIMB 9131 / NCTC 9757 / MK)).